A 429-amino-acid polypeptide reads, in one-letter code: Enolase (429 aa).

Position 163 (Gln163) interacts with (2R)-2-phosphoglycerate. Glu205 acts as the Proton donor in catalysis. Mg(2+)-binding residues include Asp242, Glu286, and Asp313. (2R)-2-phosphoglycerate contacts are provided by Lys338, Arg367, Ser368, and Lys389. Lys338 serves as the catalytic Proton acceptor.

It belongs to the enolase family. Requires Mg(2+) as cofactor.

It localises to the cytoplasm. Its subcellular location is the secreted. It is found in the cell surface. It carries out the reaction (2R)-2-phosphoglycerate = phosphoenolpyruvate + H2O. It functions in the pathway carbohydrate degradation; glycolysis; pyruvate from D-glyceraldehyde 3-phosphate: step 4/5. Functionally, catalyzes the reversible conversion of 2-phosphoglycerate (2-PG) into phosphoenolpyruvate (PEP). It is essential for the degradation of carbohydrates via glycolysis. This chain is Enolase, found in Thermoanaerobacter pseudethanolicus (strain ATCC 33223 / 39E) (Clostridium thermohydrosulfuricum).